The following is a 301-amino-acid chain: MSEEKSYCGFVAIVGRPNVGKSTLLNKLLGQKISITSRKAQTTRHRIVGIHTEGPYQAIYVDTPGLHMEEKRAINRLMNKAASSSIGDVELVIFVVEGTRWTQDDEMVLNKLRDAKAPVILAVNKVDNVQEKADLLPHLQFLASQMNFLDIVPISAETGTNVDTIAAIVRKHLPEAIHHFPEDYITDRSQRFMASEIIREKLMRFLGAELPYSVTVEIERFVSNERGGYDINGLILVEREGQKKMVIGNKGAKIKTIGIEARKDMQEMFEAPVHLELWVKVKSGWADDERALRSLGYVDDL.

One can recognise an Era-type G domain in the interval 7–175; the sequence is YCGFVAIVGR…AAIVRKHLPE (169 aa). Positions 15 to 22 are G1; sequence GRPNVGKS. 15–22 contacts GTP; it reads GRPNVGKS. Residues 41–45 form a G2 region; sequence QTTRH. A G3 region spans residues 62–65; it reads DTPG. Residues 62–66 and 124–127 each bind GTP; these read DTPGL and NKVD. Residues 124–127 form a G4 region; it reads NKVD. The tract at residues 154-156 is G5; sequence ISA. One can recognise a KH type-2 domain in the interval 206 to 283; the sequence is LGAELPYSVT…HLELWVKVKS (78 aa).

This sequence belongs to the TRAFAC class TrmE-Era-EngA-EngB-Septin-like GTPase superfamily. Era GTPase family. Monomer.

The protein resides in the cytoplasm. Its subcellular location is the cell inner membrane. An essential GTPase that binds both GDP and GTP, with rapid nucleotide exchange. Plays a role in 16S rRNA processing and 30S ribosomal subunit biogenesis and possibly also in cell cycle regulation and energy metabolism. In Klebsiella pneumoniae subsp. pneumoniae (strain ATCC 700721 / MGH 78578), this protein is GTPase Era.